A 149-amino-acid chain; its full sequence is Small ribosomal subunit protein uS9 (149 aa).

It belongs to the universal ribosomal protein uS9 family.

Its subcellular location is the cytoplasm. The protein is Small ribosomal subunit protein uS9 (RPS16A) of Oryza sativa subsp. indica (Rice).